The primary structure comprises 603 residues: uncharacterized protein (603 aa).

Residues 1–93 (MSFVIAAPET…AGAYASAEAA (93 aa)) enclose the PE domain.

The protein belongs to the mycobacterial PE family. PGRS subfamily.

This is an uncharacterized protein from Mycobacterium tuberculosis (strain ATCC 25618 / H37Rv).